A 149-amino-acid chain; its full sequence is D-aminoacyl-tRNA deacylase (149 aa).

Residues 137–138 (GP) carry the Gly-cisPro motif, important for rejection of L-amino acids motif.

Belongs to the DTD family. As to quaternary structure, homodimer.

The protein localises to the cytoplasm. It carries out the reaction glycyl-tRNA(Ala) + H2O = tRNA(Ala) + glycine + H(+). It catalyses the reaction a D-aminoacyl-tRNA + H2O = a tRNA + a D-alpha-amino acid + H(+). Its function is as follows. An aminoacyl-tRNA editing enzyme that deacylates mischarged D-aminoacyl-tRNAs. Also deacylates mischarged glycyl-tRNA(Ala), protecting cells against glycine mischarging by AlaRS. Acts via tRNA-based rather than protein-based catalysis; rejects L-amino acids rather than detecting D-amino acids in the active site. By recycling D-aminoacyl-tRNA to D-amino acids and free tRNA molecules, this enzyme counteracts the toxicity associated with the formation of D-aminoacyl-tRNA entities in vivo and helps enforce protein L-homochirality. This Thermosipho africanus (strain TCF52B) protein is D-aminoacyl-tRNA deacylase.